The following is a 122-amino-acid chain: Serum amyloid A-3 protein (122 aa).

A signal peptide spans 1 to 18; the sequence is MKPSIAIILCILILGVDS. A disordered region spans residues 87-122; it reads TGHGAEDSRADQFANEWGRSGKDPNHFRPAGLPKRY.

Belongs to the SAA family. In terms of tissue distribution, found in various tissues.

Its subcellular location is the secreted. Functionally, major acute phase reactant. Apolipoprotein of the HDL complex. In vitro exhibits antimicrobial activity against Escherichia coli, Streptococcus uberis and Pseudomonas aeruginosa. In Mus musculus (Mouse), this protein is Serum amyloid A-3 protein (Saa3).